Reading from the N-terminus, the 117-residue chain is Ig heavy chain V region MOO (117 aa).

An Ig-like domain is found at 1–116 (EVKLVESGGD…FGQGTIVTVS (116 aa)).

In Canis lupus familiaris (Dog), this protein is Ig heavy chain V region MOO.